Consider the following 178-residue polypeptide: Large ribosomal subunit protein uL6 (178 aa).

The protein belongs to the universal ribosomal protein uL6 family. Part of the 50S ribosomal subunit.

Its function is as follows. This protein binds to the 23S rRNA, and is important in its secondary structure. It is located near the subunit interface in the base of the L7/L12 stalk, and near the tRNA binding site of the peptidyltransferase center. This Campylobacter jejuni subsp. doylei (strain ATCC BAA-1458 / RM4099 / 269.97) protein is Large ribosomal subunit protein uL6.